Reading from the N-terminus, the 418-residue chain is CinA-like protein (418 aa).

This sequence belongs to the CinA family.

In Flavobacterium psychrophilum (strain ATCC 49511 / DSM 21280 / CIP 103535 / JIP02/86), this protein is CinA-like protein.